The following is a 1053-amino-acid chain: LRR receptor-like serine/threonine-protein kinase GHR1 (1053 aa).

Residues 1 to 18 (MNLSRILLLSMFFLSAMG) form the signal peptide. Over 19-630 (QLPSQDIMAL…NKSTNKLVKV (612 aa)) the chain is Extracellular. 13 LRR repeats span residues 73 to 93 (GVVLDNLGLTADADFSLFSNL), 94 to 119 (TKLVKLSMSNNSLSGVLPNDLGSFKS), 121 to 141 (QFLDLSDNLFSSSLPKEIGRS), 142 to 165 (VSLRNLSLSGNNFSGEIPESMGGL), 166 to 189 (ISLQSLDMSSNSLSGPLPKSLTRL), 191 to 212 (DLLYLNLSSNGFTGKMPRGFEL), 213 to 237 (ISSLEVLDLHGNSIDGNLDGEFFLL), 239 to 260 (NASYVDISGNRLVTTSGKLLPG), 262 to 285 (SESIKHLNLSHNQLEGSLTSGFQL), 286 to 309 (FQNLKVLDLSYNMLSGELPGFNYV), 310 to 333 (YDLEVLKLSNNRFSGSLPNNLLKG), 335 to 357 (SLLLTTLDLSGNNLSGPVSSIMS), and 358 to 384 (TTLHTLDLSSNSLTGELPLLTGGCVLL). Residue Asn92 is glycosylated (N-linked (GlcNAc...) asparagine). Phosphoserine; by HT1 is present on residues Ser100 and Ser102. Asn103 carries an N-linked (GlcNAc...) asparagine glycan. Phosphoserine; by HT1 is present on residues Ser105 and Ser126. Asn146 and Asn153 each carry an N-linked (GlcNAc...) asparagine glycan. N-linked (GlcNAc...) asparagine glycosylation occurs at Asn196. Residue Asn239 is glycosylated (N-linked (GlcNAc...) asparagine). Phosphoserine; by HT1 is present on Ser262. An N-linked (GlcNAc...) asparagine glycan is attached at Asn269. Ser278 is modified (phosphoserine; by HT1). Thr280 is modified (phosphothreonine; by HT1). Ser281 is modified (phosphoserine; by HT1). The residue at position 325 (Ser325) is a Phosphoserine; by HT1. Asn347 is a glycosylation site (N-linked (GlcNAc...) asparagine). Asn394 is a glycosylation site (N-linked (GlcNAc...) asparagine). LRR repeat units follow at residues 401–425 (WENIEYLDLSQNHFTGSFPDATPQL), 426–449 (LRANHLNLSYNKLTGSLPERIPTH), 450–474 (YPKLRVLDISSNSLEGPIPGALLSM), 476–498 (TLEEIHLQNNGMTGNIGPLPSSG), 499–521 (SRIRLLDLSHNRFDGDLPGVFGS), 522–546 (LTNLQVLNLAANNLSGSLPSSMNDI), 548–570 (SLSSLDVSQNHFTGPLPSNLSSN), and 572–592 (MAFNVSYNDLSGTVPENLKNF). Phosphotyrosine; by HT1 is present on Tyr406. Position 410 is a phosphoserine; by HT1 (Ser410). Thr415 carries the phosphothreonine; by HT1 modification. A Phosphoserine; by HT1 modification is found at Ser417. Asn432 carries an N-linked (GlcNAc...) asparagine glycan. A Phosphoserine; by HT1 modification is found at Ser434. Residues Asn534, Asn566, and Asn575 are each glycosylated (N-linked (GlcNAc...) asparagine). Phosphoserine; by HT1 occurs at positions 613, 614, and 616. Asn621 is a glycosylation site (N-linked (GlcNAc...) asparagine). Residues 631–651 (VIIVSCAVALIILILVAILLF) form a helical membrane-spanning segment. Residues 652-1053 (CICKSRRREE…KTIYEDLSSI (402 aa)) are Cytoplasmic-facing. Basic and acidic residues predominate over residues 662-671 (RSITGKETNR). The segment at 662-684 (RSITGKETNRRAQTIPSGSGGGM) is disordered. Phosphothreonine; by HT1 occurs at positions 669 and 675. A phosphoserine; by HT1 mark is found at Ser678, Ser680, Ser698, Ser699, and Ser700. Residue Ser704 is modified to Phosphoserine. The residue at position 713 (Thr713) is a Phosphothreonine; by HT1. Phosphoserine; by HT1 is present on residues Ser716 and Ser718. Thr720 is modified (phosphothreonine; by HT1). Phosphoserine; by HT1 is present on residues Ser721, Ser724, and Ser760. Thr764 carries the post-translational modification Phosphothreonine; by HT1. Ser769 carries the phosphoserine; by HT1 modification. The Protein kinase domain maps to 770-1053 (RAPAEVLGRS…KTIYEDLSSI (284 aa)). ATP contacts are provided by residues 776-784 (LGRSSHGTS) and Lys798. A phosphothreonine; by HT1 mark is found at Thr928 and Thr1010. Ser1015 carries the post-translational modification Phosphoserine; by HT1. Thr1045 is subject to Phosphothreonine; by HT1. Position 1047 is a phosphotyrosine; by HT1 (Tyr1047). Ser1051 and Ser1052 each carry phosphoserine; by HT1.

Belongs to the protein kinase superfamily. Ser/Thr protein kinase family. Interacts with SLAC1 (via N-terminus). Binds to ABI2, but not ABI1. Interacts with CPK3. Post-translationally, phosphorylated by HT1; this phosphorylation is inhibited by MPK12 and MPK4. In terms of tissue distribution, expressed in guard cells and in the vasculature of roots and leaves.

The protein localises to the cell membrane. It carries out the reaction L-seryl-[protein] + ATP = O-phospho-L-seryl-[protein] + ADP + H(+). The enzyme catalyses L-threonyl-[protein] + ATP = O-phospho-L-threonyl-[protein] + ADP + H(+). With respect to regulation, negatively regulated by ABI2. Receptor kinase acting as an early component in abscisic acid (ABA) signaling. Required for darkness, ABA, high CO(2) and hydrogen peroxide (H(2)O(2)) induction of S-type anion currents in guard cells leading to stomatal closure, possibly via the phosphorylation and activation of the anion channel SLAC1 and as a scaffolding component. Seems to act in parallel with SRK2E/OST1 in the ABA signaling pathway which regulates stomatal movement. Binds ATP. Involved in the local and/or systemic stomatal responses (e.g. stomatal closure) to light stress. The chain is LRR receptor-like serine/threonine-protein kinase GHR1 from Arabidopsis thaliana (Mouse-ear cress).